The chain runs to 302 residues: Bifunctional protein FolD (302 aa).

NADP(+)-binding positions include 165-167 (GRS), S190, and I231.

This sequence belongs to the tetrahydrofolate dehydrogenase/cyclohydrolase family. In terms of assembly, homodimer.

The enzyme catalyses (6R)-5,10-methylene-5,6,7,8-tetrahydrofolate + NADP(+) = (6R)-5,10-methenyltetrahydrofolate + NADPH. It catalyses the reaction (6R)-5,10-methenyltetrahydrofolate + H2O = (6R)-10-formyltetrahydrofolate + H(+). The protein operates within one-carbon metabolism; tetrahydrofolate interconversion. Catalyzes the oxidation of 5,10-methylenetetrahydrofolate to 5,10-methenyltetrahydrofolate and then the hydrolysis of 5,10-methenyltetrahydrofolate to 10-formyltetrahydrofolate. This Prochlorococcus marinus (strain SARG / CCMP1375 / SS120) protein is Bifunctional protein FolD.